Here is a 234-residue protein sequence, read N- to C-terminus: Purine nucleoside phosphorylase DeoD-type (234 aa).

Histidine 4 serves as a coordination point for a purine D-ribonucleoside. Phosphate contacts are provided by residues glycine 20, arginine 24, arginine 43, and 87 to 90; that span reads RVGT. A purine D-ribonucleoside-binding positions include glutamate 162, 178 to 180, and 202 to 203; these read EME and SD. Aspartate 203 functions as the Proton donor in the catalytic mechanism.

Belongs to the PNP/UDP phosphorylase family. As to quaternary structure, homohexamer; trimer of homodimers.

It catalyses the reaction a purine D-ribonucleoside + phosphate = a purine nucleobase + alpha-D-ribose 1-phosphate. The catalysed reaction is a purine 2'-deoxy-D-ribonucleoside + phosphate = a purine nucleobase + 2-deoxy-alpha-D-ribose 1-phosphate. Functionally, catalyzes the reversible phosphorolytic breakdown of the N-glycosidic bond in the beta-(deoxy)ribonucleoside molecules, with the formation of the corresponding free purine bases and pentose-1-phosphate. The sequence is that of Purine nucleoside phosphorylase DeoD-type from Anoxybacillus flavithermus (strain DSM 21510 / WK1).